Here is a 266-residue protein sequence, read N- to C-terminus: ATP synthase subunit a (266 aa).

The next 7 membrane-spanning stretches (helical) occupy residues 28 to 48, 90 to 110, 125 to 145, 158 to 178, 187 to 207, 216 to 236, and 239 to 259; these read ISFTNSALWMVIAMAALAIFM, LIFTLFMFILFANLLGLVPLF, VTVTATLAAIAFGTVLVVGFT, HGTPMALIWLIPGIEAFSFIL, LFVAMTAGHVLLEVLANFIVN, AFLAGYYTLVGIPTFLLMIGI, and LEFLVCAIQAYVFALLTSLYL.

This sequence belongs to the ATPase A chain family. As to quaternary structure, F-type ATPases have 2 components, CF(1) - the catalytic core - and CF(0) - the membrane proton channel. CF(1) has five subunits: alpha(3), beta(3), gamma(1), delta(1), epsilon(1). CF(0) has three main subunits: a(1), b(2) and c(9-12). The alpha and beta chains form an alternating ring which encloses part of the gamma chain. CF(1) is attached to CF(0) by a central stalk formed by the gamma and epsilon chains, while a peripheral stalk is formed by the delta and b chains.

It localises to the cell inner membrane. Functionally, key component of the proton channel; it plays a direct role in the translocation of protons across the membrane. This is ATP synthase subunit a from Zymomonas mobilis subsp. mobilis (strain ATCC 31821 / ZM4 / CP4).